Consider the following 146-residue polypeptide: MISSCVTRCFGRGKCLPGPATASIYQTIRCISTNSNKAAEAPIFPKLEDVKMHELIGNNNFGKKTYYVERSRTGNLPVYSAYKNGGNKIITEIRKIEGDVIQLRNDLQEQLPFIPKKSWSVVMQSKKIIIKGNAVEAVKRVLTKKF.

A mitochondrion-targeting transit peptide spans 1–38 (MISSCVTRCFGRGKCLPGPATASIYQTIRCISTNSNKA).

This sequence belongs to the mitochondrion-specific ribosomal protein mL49 family. In terms of assembly, component of the mitochondrial large ribosomal subunit (mt-LSU). Mature yeast 74S mitochondrial ribosomes consist of a small (37S) and a large (54S) subunit. The 37S small subunit contains a 15S ribosomal RNA (15S mt-rRNA) and 34 different proteins. The 54S large subunit contains a 21S rRNA (21S mt-rRNA) and 46 different proteins.

The protein resides in the mitochondrion. Its function is as follows. Component of the mitochondrial ribosome (mitoribosome), a dedicated translation machinery responsible for the synthesis of mitochondrial genome-encoded proteins, including at least some of the essential transmembrane subunits of the mitochondrial respiratory chain. The mitoribosomes are attached to the mitochondrial inner membrane and translation products are cotranslationally integrated into the membrane. This chain is Large ribosomal subunit protein mL49 (IMG2), found in Saccharomyces cerevisiae (strain ATCC 204508 / S288c) (Baker's yeast).